Reading from the N-terminus, the 489-residue chain is NAC domain-containing protein 74 (489 aa).

The 151-residue stretch at 9–159 (LPPGFGFHPK…AYVLCRITKR (151 aa)) folds into the NAC domain. Residues 108-165 (IGTKKTLVFHEGRPPTGRRTEWIMHEYYIDERECQACPDMKDAYVLCRITKRNDWIPG) mediate DNA binding. Residues 413 to 427 (KNQAHDVASTKRSDA) show a composition bias toward basic and acidic residues. A disordered region spans residues 413–435 (KNQAHDVASTKRSDAGKPSTELS). A helical transmembrane segment spans residues 456-476 (WNMILVAGFAIGVAVVALHIG).

In terms of tissue distribution, widely expressed.

It is found in the nucleus. Its subcellular location is the cell membrane. Transcription activator involved in heat and endoplasmic reticulum (ER) stress responses. Regulates the expression of genes involved in ER protein folding and heat stress-responsive genes. Binds directly to the promoter of BZIP74 and regulates its expression in response to heat stress. This is NAC domain-containing protein 74 from Oryza sativa subsp. japonica (Rice).